Consider the following 359-residue polypeptide: Epoxide hydrolase 4 (359 aa).

Residues 15 to 35 (ALLYWSLVYGYCGLCASVHLL) form a helical; Signal-anchor for type II membrane protein membrane-spanning segment. Residues 92–337 (PLMLLLHGFP…ILSEGSHWLQ (246 aa)) enclose the AB hydrolase-1 domain. Asp167 serves as the catalytic Nucleophile. The Proton donor role is filled by Tyr279. His334 functions as the Proton acceptor in the catalytic mechanism.

It belongs to the AB hydrolase superfamily. Epoxide hydrolase family.

The protein resides in the membrane. The protein is Epoxide hydrolase 4 (Ephx4) of Mus musculus (Mouse).